The primary structure comprises 298 residues: Putative cysteine protease YopT-like blr2058 (298 aa).

The segment covering 1-14 has biased composition (basic and acidic residues); that stretch reads MYNRVDGEYAHTEQ. 2 disordered regions span residues 1–25 and 59–80; these read MYNR…ADGS and SDAI…SSSS. Over residues 65-80 the composition is skewed to low complexity; sequence SSNTSGLSTSSLSSSS. C109 is an active-site residue. The span at 137–162 shows a compositional bias: basic and acidic residues; that stretch reads NHRSAARRQEQSEKLKTQLKEDKAEG. Residues 137 to 166 are disordered; it reads NHRSAARRQEQSEKLKTQLKEDKAEGSHNF. Catalysis depends on residues H223 and D238.

Belongs to the peptidase C58 family.

Potential cysteine protease, which may play a central role after invasion of host cell. The chain is Putative cysteine protease YopT-like blr2058 from Bradyrhizobium diazoefficiens (strain JCM 10833 / BCRC 13528 / IAM 13628 / NBRC 14792 / USDA 110).